The chain runs to 197 residues: Molybdenum cofactor guanylyltransferase (197 aa).

GTP contacts are provided by residues L10–G12, K23, D69, and D99. D99 contributes to the Mg(2+) binding site.

This sequence belongs to the MobA family. Monomer. The cofactor is Mg(2+).

It localises to the cytoplasm. It carries out the reaction Mo-molybdopterin + GTP + H(+) = Mo-molybdopterin guanine dinucleotide + diphosphate. Its function is as follows. Transfers a GMP moiety from GTP to Mo-molybdopterin (Mo-MPT) cofactor (Moco or molybdenum cofactor) to form Mo-molybdopterin guanine dinucleotide (Mo-MGD) cofactor. The sequence is that of Molybdenum cofactor guanylyltransferase from Serratia proteamaculans (strain 568).